The primary structure comprises 427 residues: Inward rectifier potassium channel 2 (427 aa).

The Cytoplasmic portion of the chain corresponds to 1 to 81 (MGSVRTNRYS…IFTTCVDIRW (81 aa)). Cys-76 carries the post-translational modification S-nitrosocysteine. Residues 82 to 106 (RWMLVIFCLAFVLSWLFFGCVFWLI) form a helical membrane-spanning segment. Residues 107 to 128 (ALLHGDLDASKESKACVSEVNS) lie on the Extracellular side of the membrane. The segment at residues 129–140 (FTAAFLFSIETQ) is an intramembrane region (helical; Pore-forming). An intramembrane region (pore-forming) is located at residues 141–147 (TTIGYGF). Positions 142–147 (TIGYGF) match the Selectivity filter motif. Residues 148–156 (RCVTDECPI) are Extracellular-facing. Residues 157–178 (AVFMVVFQSIVGCIIDAFIIGA) form a helical membrane-spanning segment. Residues 179–427 (VMAKMAKPKK…PRPLRRESEI (249 aa)) are Cytoplasmic-facing. Residues 181–208 (AKMAKPKKRNETLVFSHNAVIAMRDGKL) are polyphosphoinositide (PIP2)-binding. Positions 384–427 (SKEEDDSENGVPESTSTDTPPDIDLHNQASVPLEPRPLRRESEI) are disordered. The PDZ-binding motif lies at 425–427 (SEI).

Belongs to the inward rectifier-type potassium channel (TC 1.A.2.1) family. KCNJ2 subfamily. As to quaternary structure, homotetramer. Homomultimeric and heteromultimeric association with KCNJ4/Kir2.3. Can form heteromeric channels with Kir2.6/KCNJ18. Associates, via its PDZ-recognition domain, with a complex containing LIN7A, LIN7B, LIN7C, DLG1, CASK and APBA1. S-nitrosylation increases the open probability and inward rectifying currents.

The protein resides in the cell membrane. It is found in the sarcolemma. The protein localises to the T-tubule. The catalysed reaction is K(+)(in) = K(+)(out). Activated by phosphatidylinositol 4,5 biphosphate (PtdIns(4,5)P2). Functionally, inward rectifier potassium channels are characterized by a greater tendency to allow potassium to flow into the cell rather than out of it. Their voltage dependence is regulated by the concentration of extracellular potassium; as external potassium is raised, the voltage range of the channel opening shifts to more positive voltages. The inward rectification is mainly due to the blockage of outward current by internal magnesium. Can be blocked by extracellular barium and cesium. Probably participates in establishing action potential waveform and excitability of neuronal and muscle tissues. This is Inward rectifier potassium channel 2 (KCNJ2) from Sus scrofa (Pig).